Reading from the N-terminus, the 513-residue chain is Na(+)/H(+) antiporter NhaB (513 aa).

11 helical membrane-spanning segments follow: residues 21 to 41 (LCIITFLVINPLIYFFVSPFI), 43 to 63 (GWTLVAEFIFTLSMALKCYPL), 88 to 108 (IIANFEVILLLMFMVAGIYFM), 137 to 157 (AAFLSAFLDALTVIAVIISVG), 202 to 222 (LLMHAAVGSALGGVMTMVGEP), 235 to 255 (FIEFLIRVAPVSLPVLICGIA), 299 to 318 (MAIQALAGIWLIVGLALHLA), 322 to 344 (IIGLTIIIICTAFCGITDEHAIG), 350 to 370 (PMPFTALIVVFFTIVAVIVDL), 389 to 409 (LALFYVFNGLLSMISDNVFVG), and 477 to 497 (MALPYTIVLSIVGFFALEYLL).

The protein belongs to the NhaB Na(+)/H(+) (TC 2.A.34) antiporter family.

It localises to the cell inner membrane. The enzyme catalyses 2 Na(+)(in) + 3 H(+)(out) = 2 Na(+)(out) + 3 H(+)(in). Na(+)/H(+) antiporter that extrudes sodium in exchange for external protons. In Haemophilus ducreyi (strain 35000HP / ATCC 700724), this protein is Na(+)/H(+) antiporter NhaB.